A 102-amino-acid chain; its full sequence is Small ribosomal subunit protein uS10 (102 aa).

Belongs to the universal ribosomal protein uS10 family. Part of the 30S ribosomal subunit.

Its function is as follows. Involved in the binding of tRNA to the ribosomes. The polypeptide is Small ribosomal subunit protein uS10 (Roseiflexus castenholzii (strain DSM 13941 / HLO8)).